The sequence spans 411 residues: Argininosuccinate synthase (411 aa).

Residues 10–18 (AYSGGLDTS) and Ala-37 contribute to the ATP site. Positions 89 and 94 each coordinate L-citrulline. An ATP-binding site is contributed by Gly-119. Residues Thr-121, Asn-125, and Asp-126 each coordinate L-aspartate. L-citrulline is bound at residue Asn-125. Residues Arg-129, Ser-178, Ser-187, Glu-263, and Tyr-275 each coordinate L-citrulline.

It belongs to the argininosuccinate synthase family. Type 1 subfamily. In terms of assembly, homotetramer.

The protein localises to the cytoplasm. It catalyses the reaction L-citrulline + L-aspartate + ATP = 2-(N(omega)-L-arginino)succinate + AMP + diphosphate + H(+). The protein operates within amino-acid biosynthesis; L-arginine biosynthesis; L-arginine from L-ornithine and carbamoyl phosphate: step 2/3. The protein is Argininosuccinate synthase of Aeromonas hydrophila subsp. hydrophila (strain ATCC 7966 / DSM 30187 / BCRC 13018 / CCUG 14551 / JCM 1027 / KCTC 2358 / NCIMB 9240 / NCTC 8049).